Consider the following 113-residue polypeptide: Protein NATD1 (113 aa).

The segment covering 1-16 has biased composition (low complexity); it reads MAQSPAAASPGAPEQG. The segment at 1-20 is disordered; sequence MAQSPAAASPGAPEQGCPIR. The N-acetyltransferase domain occupies 22 to 112; the sequence is EHDRRRRQFT…PLPQYLERLQ (91 aa).

It belongs to the NATD1 family.

This Bos taurus (Bovine) protein is Protein NATD1 (NATD1).